The primary structure comprises 416 residues: Carboxypeptidase B (416 aa).

The N-terminal stretch at Met-1–His-15 is a signal peptide. Residues Tyr-16–Pro-109 constitute a propeptide, activation peptide. Residues Lys-117 to Val-411 form the Peptidase M14 domain. Residues His-175 and Glu-178 each coordinate Zn(2+). Substrate is bound by residues His-175–Glu-178, Arg-233, and Thr-250–Arg-251. 2 disulfides stabilise this stretch: Cys-244–Cys-267 and Cys-258–Cys-272. Zn(2+) is bound at residue His-303. Substrate is bound by residues Ser-304–Tyr-305 and Tyr-355. The Proton donor/acceptor role is filled by Glu-377.

The protein belongs to the peptidase M14 family. Zn(2+) serves as cofactor.

Its subcellular location is the secreted. The protein localises to the zymogen granule lumen. The enzyme catalyses Preferential release of a C-terminal lysine or arginine amino acid.. This chain is Carboxypeptidase B (CPB1), found in Canis lupus familiaris (Dog).